The primary structure comprises 415 residues: F-box protein At3g13820 (415 aa).

An F-box domain is found at 1 to 50; that stretch reads MTTMSNLPAEVLEEILSRTPVTSLRTMRSTCKKWNNLSKKKIIPEAARKQ. 2 disordered regions span residues 209-229 and 387-415; these read NDYD…EDDD and KQPK…KIIG. A compositionally biased stretch (acidic residues) spans 210–229; the sequence is DYDDQEDEEEEDDEEYEDDD. The segment covering 403 to 415 has biased composition (basic residues); the sequence is NKNKKGRKIKIIG.

This Arabidopsis thaliana (Mouse-ear cress) protein is F-box protein At3g13820.